The primary structure comprises 133 residues: Hemiptericin (133 aa).

Its function is as follows. Antibacterial peptide. Affects Gram-negative bacteria. The chain is Hemiptericin from Pyrrhocoris apterus (Sap sucking bug).